A 36-amino-acid chain; its full sequence is Dermonecrotic toxin LgSicTox-beta-LOXN1/LOXN7 (36 aa).

Belongs to the arthropod phospholipase D family. Class II subfamily. Mg(2+) serves as cofactor. Contains 2 disulfide bonds. In terms of tissue distribution, expressed by the venom gland.

It localises to the secreted. It carries out the reaction an N-(acyl)-sphingosylphosphocholine = an N-(acyl)-sphingosyl-1,3-cyclic phosphate + choline. The enzyme catalyses an N-(acyl)-sphingosylphosphoethanolamine = an N-(acyl)-sphingosyl-1,3-cyclic phosphate + ethanolamine. It catalyses the reaction a 1-acyl-sn-glycero-3-phosphocholine = a 1-acyl-sn-glycero-2,3-cyclic phosphate + choline. The catalysed reaction is a 1-acyl-sn-glycero-3-phosphoethanolamine = a 1-acyl-sn-glycero-2,3-cyclic phosphate + ethanolamine. Functionally, dermonecrotic toxins cleave the phosphodiester linkage between the phosphate and headgroup of certain phospholipids (sphingolipid and lysolipid substrates), forming an alcohol (often choline) and a cyclic phosphate. This toxin acts on sphingomyelin (SM). It may also act on ceramide phosphoethanolamine (CPE), lysophosphatidylcholine (LPC) and lysophosphatidylethanolamine (LPE), but not on lysophosphatidylserine (LPS), and lysophosphatidylglycerol (LPG). It acts by transphosphatidylation, releasing exclusively cyclic phosphate products as second products. Induces dermonecrosis, hemolysis, increased vascular permeability, edema, inflammatory response, and platelet aggregation. In Loxosceles gaucho (Spider), this protein is Dermonecrotic toxin LgSicTox-beta-LOXN1/LOXN7.